The following is a 660-amino-acid chain: Bifunctional polymyxin resistance protein ArnA (660 aa).

Positions 1-304 are formyltransferase ArnAFT; that stretch reads MKTVVFAYHD…TLGLVQGSRL (304 aa). 86 to 88 is a binding site for (6R)-10-formyltetrahydrofolate; it reads HLI. His-104 functions as the Proton donor; for formyltransferase activity in the catalytic mechanism. (6R)-10-formyltetrahydrofolate is bound by residues Arg-114 and 136 to 140; that span reads VKRAD. The segment at 314–660 is dehydrogenase ArnADH; the sequence is RRTRVLILGV…RTVDLTDKPS (347 aa). Residues Asp-347 and 368–369 contribute to the NAD(+) site; that span reads DI. Residues Ala-393, Tyr-398, and 432-433 each bind UDP-alpha-D-glucuronate; that span reads TS. The Proton acceptor; for decarboxylase activity role is filled by Glu-434. UDP-alpha-D-glucuronate contacts are provided by residues Arg-460, Asn-492, 526 to 535, and Tyr-613; that span reads KLIDGGKQKR. The Proton donor; for decarboxylase activity role is filled by Arg-619.

The protein in the N-terminal section; belongs to the Fmt family. UDP-L-Ara4N formyltransferase subfamily. In the C-terminal section; belongs to the NAD(P)-dependent epimerase/dehydratase family. UDP-glucuronic acid decarboxylase subfamily. In terms of assembly, homohexamer, formed by a dimer of trimers.

It catalyses the reaction UDP-alpha-D-glucuronate + NAD(+) = UDP-beta-L-threo-pentopyranos-4-ulose + CO2 + NADH. The enzyme catalyses UDP-4-amino-4-deoxy-beta-L-arabinose + (6R)-10-formyltetrahydrofolate = UDP-4-deoxy-4-formamido-beta-L-arabinose + (6S)-5,6,7,8-tetrahydrofolate + H(+). Its pathway is nucleotide-sugar biosynthesis; UDP-4-deoxy-4-formamido-beta-L-arabinose biosynthesis; UDP-4-deoxy-4-formamido-beta-L-arabinose from UDP-alpha-D-glucuronate: step 1/3. It participates in nucleotide-sugar biosynthesis; UDP-4-deoxy-4-formamido-beta-L-arabinose biosynthesis; UDP-4-deoxy-4-formamido-beta-L-arabinose from UDP-alpha-D-glucuronate: step 3/3. The protein operates within bacterial outer membrane biogenesis; lipopolysaccharide biosynthesis. Its function is as follows. Bifunctional enzyme that catalyzes the oxidative decarboxylation of UDP-glucuronic acid (UDP-GlcUA) to UDP-4-keto-arabinose (UDP-Ara4O) and the addition of a formyl group to UDP-4-amino-4-deoxy-L-arabinose (UDP-L-Ara4N) to form UDP-L-4-formamido-arabinose (UDP-L-Ara4FN). The modified arabinose is attached to lipid A and is required for resistance to polymyxin and cationic antimicrobial peptides. This is Bifunctional polymyxin resistance protein ArnA from Escherichia coli O81 (strain ED1a).